We begin with the raw amino-acid sequence, 267 residues long: GTP cyclohydrolase MptA (267 aa).

The protein belongs to the GTP cyclohydrolase IV family. In terms of assembly, homodimer. Fe(2+) serves as cofactor.

It carries out the reaction GTP + H2O = 7,8-dihydroneopterin 2',3'-cyclic phosphate + formate + diphosphate + H(+). The protein operates within cofactor biosynthesis; 5,6,7,8-tetrahydromethanopterin biosynthesis. Converts GTP to 7,8-dihydro-D-neopterin 2',3'-cyclic phosphate, the first intermediate in the biosynthesis of coenzyme methanopterin. The chain is GTP cyclohydrolase MptA from Pyrococcus furiosus (strain ATCC 43587 / DSM 3638 / JCM 8422 / Vc1).